We begin with the raw amino-acid sequence, 775 residues long: Kinesin-like protein KIF3B (775 aa).

The 333-residue stretch at 9–341 folds into the Kinesin motor domain; the sequence is SVKVVVRCRP…LRYANRAKNI (333 aa). 97–104 contributes to the ATP binding site; it reads GQTGTGKT. The interval 372–419 is disordered; the sequence is KRSGRKRRRRRRRRVGEGGEEFEDGEDEEDDDDDDEDEEEGVDADKNI. Residues 374-385 are compositionally biased toward basic residues; that stretch reads SGRKRRRRRRRR. Acidic residues predominate over residues 389 to 413; it reads GGEEFEDGEDEEDDDDDDEDEEEGV. Residues 501–591 are a coiled coil; it reads LELKRQEIAE…QNELTRELKL (91 aa). Residues 716–775 form a disordered region; sequence FHASLGSSPGLSASAAGFSKKPKSGRPKTGKKVSTPTSAHSPLSGSGSPLYPQSRGLVPK. A compositionally biased stretch (low complexity) spans 718–734; it reads ASLGSSPGLSASAAGFS. Over residues 735–746 the composition is skewed to basic residues; the sequence is KKPKSGRPKTGK. Positions 756–765 are enriched in low complexity; the sequence is SPLSGSGSPL.

This sequence belongs to the TRAFAC class myosin-kinesin ATPase superfamily. Kinesin family. As to quaternary structure, heterodimer of KIF3A and KIF3B. KIF3A/KIF3B heterodimer interacts with KIFAP3 forming a heterotrimeric (KIF3A/KIF3B/KIFAP3) complex.

The protein localises to the cytoplasm. It localises to the cytoskeleton. It is found in the cell projection. Its subcellular location is the cilium. The protein resides in the dendritic spine. In terms of biological role, microtubule-based molecular motor that transport intracellular cargos, such as vesicles, organelles and protein complexes. Uses ATP hydrolysis to generate force to bind and move along the microtubule. Plays a role in cilia formation. Required for photoreceptor development. The sequence is that of Kinesin-like protein KIF3B from Danio rerio (Zebrafish).